The following is a 231-amino-acid chain: Secreted LysM effector LysM13 (231 aa).

The first 19 residues, 1–19 (MVFLSLKYALSGLAATAAA), serve as a signal peptide directing secretion. Residues N30, N34, N77, N100, N130, N201, and N226 are each glycosylated (N-linked (GlcNAc...) asparagine). In terms of domain architecture, LysM spans 38 to 82 (TTYTTTSEDTIFTVARKFDRGPCDIARYNRMIDAEHIFANFTLRI).

It belongs to the secreted LysM effector family.

The protein localises to the secreted. Its function is as follows. Secreted LysM effector that might have a role in sequestration of chitin oligosaccharides (breakdown products of fungal cell walls that are released during invasion and act as triggers of host immunity) to dampen host defense. This is Secreted LysM effector LysM13 from Penicillium expansum (Blue mold rot fungus).